Reading from the N-terminus, the 265-residue chain is Type III pantothenate kinase (265 aa).

6–13 (DVGNTNIV) contacts ATP. Residues Tyr100 and 107 to 110 (GADR) contribute to the substrate site. Asp109 functions as the Proton acceptor in the catalytic mechanism. Asp129 contacts K(+). Thr132 contributes to the ATP binding site. Thr184 is a binding site for substrate.

This sequence belongs to the type III pantothenate kinase family. In terms of assembly, homodimer. NH4(+) is required as a cofactor. The cofactor is K(+).

It localises to the cytoplasm. It carries out the reaction (R)-pantothenate + ATP = (R)-4'-phosphopantothenate + ADP + H(+). Its pathway is cofactor biosynthesis; coenzyme A biosynthesis; CoA from (R)-pantothenate: step 1/5. Its function is as follows. Catalyzes the phosphorylation of pantothenate (Pan), the first step in CoA biosynthesis. This chain is Type III pantothenate kinase, found in Alkaliphilus oremlandii (strain OhILAs) (Clostridium oremlandii (strain OhILAs)).